Reading from the N-terminus, the 360-residue chain is LETM1 domain-containing protein 1 (360 aa).

Residues 1-110 form a required and sufficient for mitochondrial import region; sequence MALSRVCWAR…KKARRIKTNM (110 aa). The Cytoplasmic portion of the chain corresponds to 1-137; that stretch reads MALSRVCWAR…LRQFRRDVTK (137 aa). A helical transmembrane segment spans residues 138–158; it reads CLFLGILSIPPFANYLVFLLM. Residues 159–360 lie on the Mitochondrial intermembrane side of the membrane; it reads YLFPRQLLIR…LSINYVGSRR (202 aa). The 175-residue stretch at 186–360 folds into the Letm1 RBD domain; sequence LRKQSHPEIL…LSINYVGSRR (175 aa).

Interacts with BRI3BP. Interacts (via C-terminal) with SMARCA4; the interaction regulates transcriptional expression of thermogenic genes in brown adipose tissue.

Its subcellular location is the mitochondrion outer membrane. The protein localises to the nucleus. It localises to the mitochondrion inner membrane. Functionally, plays an essential role for mitochondrial structure and function, as well as thermogenesis of brown adipocytes. In brown adipose tissue also localizes in the nucleus where it interacts with the chromatin remodeler SMARCA4 to regulate thermogenic genes expression, such as UCP1. May regulate phagocytosis and inflammatory responses to lipopolysaccharide in macrophages. Involved in tumorigenesis and may function as a negative regulator of the p53/TP53. This is LETM1 domain-containing protein 1 from Bos taurus (Bovine).